We begin with the raw amino-acid sequence, 111 residues long: Nitrogen regulatory protein P-II (111 aa).

At Tyr-50 the chain carries O-UMP-tyrosine.

The protein belongs to the P(II) protein family. In terms of assembly, homotrimer.

Functionally, in nitrogen-limiting conditions, when the ratio of Gln to 2-ketoglutarate decreases, P-II is uridylylated to P-II-UMP. P-II-UMP allows the deadenylation of glutamine synthetase (GS), thus activating the enzyme. Conversely, in nitrogen excess P-II is deuridylated and promotes the adenylation of GS. P-II indirectly controls the transcription of the GS gene (glnA). P-II prevents NR-II-catalyzed conversion of NR-I to NR-I-phosphate, the transcriptional activator of glnA. When P-II is uridylylated to P-II-UMP, these events are reversed. This Rhizobium leguminosarum bv. viciae protein is Nitrogen regulatory protein P-II (glnB).